We begin with the raw amino-acid sequence, 433 residues long: WD repeat domain phosphoinositide-interacting protein 1 (433 aa).

The Nuclear receptor interaction motif lies at 127 to 132 (LLKTLL). WD repeat units lie at residues 136–177 (RNPH…CECT) and 180–220 (AHDS…KLYE). Residues 221 to 224 (FRRG) carry the L/FRRG motif motif. 2 WD repeats span residues 226 to 265 (KRYV…ERSE) and 296 to 346 (DRAF…GGEC).

The protein belongs to the WD repeat PROPPIN family.

The protein resides in the golgi apparatus. The protein localises to the trans-Golgi network. It localises to the endosome. Its subcellular location is the cytoplasmic vesicle. It is found in the clathrin-coated vesicle. The protein resides in the preautophagosomal structure membrane. The protein localises to the cytoplasm. It localises to the cytoskeleton. Its function is as follows. Component of the autophagy machinery that controls the major intracellular degradation process by which cytoplasmic materials are packaged into autophagosomes and delivered to lysosomes for degradation. Plays an important role in starvation- and calcium-mediated autophagy, as well as in mitophagy. Functions downstream of the ulk1 and PI3-kinases that produce phosphatidylinositol 3-phosphate (PtdIns3P) on membranes of the endoplasmic reticulum once activated. Binds phosphatidylinositol 3-phosphate (PtdIns3P), and maybe other phosphoinositides including PtdIns3,5P2 and PtdIns5P, and is recruited to phagophore assembly sites at the endoplasmic reticulum membranes. There, it assists wipi2 in the recruitment of atg12-atg5-atg16l1, a complex that directly controls the elongation of the nascent autophagosomal membrane. Together with wdr45/wipi4, promotes atg2 (atg2a or atg2b)-mediated lipid transfer by enhancing atg2-association with phosphatidylinositol 3-monophosphate (PI3P)-containing membranes. This Xenopus laevis (African clawed frog) protein is WD repeat domain phosphoinositide-interacting protein 1 (wipi1).